Reading from the N-terminus, the 305-residue chain is Mat- sexual cell fertilization-promoting factor (305 aa).

Residues 38–93 constitute a DNA-binding region (alpha box); that stretch reads PAKKKVNGFMGYRSYYSSMFSQLPQKERSPILTTLWQQDPFHKEWDFMCAVYSAIR.

It belongs to the MATALPHA1 family.

The protein resides in the nucleus. Its function is as follows. Controls fertilization, probably by determining the mating type. May be involved in the post-fertilization steps of the sexual cycle besides mat+. It is required for the developmental events that occur in the female organ after fertilization. The polypeptide is Mat- sexual cell fertilization-promoting factor (FMR1) (Podospora anserina (Pleurage anserina)).